The primary structure comprises 356 residues: RuBisCO accumulation factor 1 (356 aa).

Positions 9–192 (LSEEERQELL…RALIEALLLD (184 aa)) are N-terminal alpha-helix. The tract at residues 216–342 (PRLLPFAGTL…LVLILRPKRV (127 aa)) is C-terminal beta-sheet.

The protein belongs to the RAF family. As to quaternary structure, homodimer. Forms an RbcL(8)-Raf1(8) complex. Forms complexes of many stoichiometries with RbcL with and without RbcS. RbcX and Raf1 can bind simultaneously to RbcL.

Its subcellular location is the cytoplasm. In terms of biological role, a major RuBisCO chaperone. Acts after GroEL-GroES chaperonin to fold and/or assemble the large subunit of RuBisCO (ccbL, rbcL). Cooperates with RbcX in RbcL folding, plays the major role in assembly of dimers into RbcL(8)-Raf1(8) intermediate complexes. RbcS replaces Raf1, leading to holoenzyme formation. Functionally, the Raf1 dimer brackets an RbcL dimer, leading to RbcL(8)-Raf1(8) complex formation. RbcS displaces Raf1, resulting in holoenzyme formation. Probably plays a role in early carboxysome assembly; in its absence CcaA, CcmM, CcmN, RbcL and RbcS colocalize in small patches while the shell proteins CcmK2, CcmK3 and CcmK4 are found diffused in the cytoplasm. It has been suggested that Raf1 and RbcX are partially functionally redundant. Other evidence suggests they are antagonistic in mediating RuBisCO assembly. The polypeptide is RuBisCO accumulation factor 1 (Synechococcus elongatus (strain ATCC 33912 / PCC 7942 / FACHB-805) (Anacystis nidulans R2)).